Consider the following 512-residue polypeptide: Nuclear fusion protein FUS1 (512 aa).

A helical transmembrane segment spans residues isoleucine 72–leucine 96. Residues lysine 97–aspartate 512 are hydrophilic. Threonine 178 is modified (phosphothreonine). Phosphoserine is present on residues serine 190 and serine 256. Phosphothreonine occurs at positions 281 and 424. In terms of domain architecture, SH3 spans glutamine 436–aspartate 512.

In terms of processing, O-glycosylated.

It localises to the membrane. Functionally, required for cell fusion. Negatively regulates Sho1p signaling to ensure efficient cell fusion. In terms of biological role, interacts with SHO1. The sequence is that of Nuclear fusion protein FUS1 (FUS1) from Saccharomyces cerevisiae (strain ATCC 204508 / S288c) (Baker's yeast).